Here is a 355-residue protein sequence, read N- to C-terminus: UDP-N-acetylglucosamine--N-acetylmuramyl-(pentapeptide) pyrophosphoryl-undecaprenol N-acetylglucosamine transferase (355 aa).

Residues 11 to 13, asparagine 123, arginine 162, serine 185, isoleucine 239, 258 to 263, and glutamine 284 each bind UDP-N-acetyl-alpha-D-glucosamine; these read TGG and ALTVSE.

Belongs to the glycosyltransferase 28 family. MurG subfamily.

It is found in the cell inner membrane. The enzyme catalyses di-trans,octa-cis-undecaprenyl diphospho-N-acetyl-alpha-D-muramoyl-L-alanyl-D-glutamyl-meso-2,6-diaminopimeloyl-D-alanyl-D-alanine + UDP-N-acetyl-alpha-D-glucosamine = di-trans,octa-cis-undecaprenyl diphospho-[N-acetyl-alpha-D-glucosaminyl-(1-&gt;4)]-N-acetyl-alpha-D-muramoyl-L-alanyl-D-glutamyl-meso-2,6-diaminopimeloyl-D-alanyl-D-alanine + UDP + H(+). Its pathway is cell wall biogenesis; peptidoglycan biosynthesis. Functionally, cell wall formation. Catalyzes the transfer of a GlcNAc subunit on undecaprenyl-pyrophosphoryl-MurNAc-pentapeptide (lipid intermediate I) to form undecaprenyl-pyrophosphoryl-MurNAc-(pentapeptide)GlcNAc (lipid intermediate II). This chain is UDP-N-acetylglucosamine--N-acetylmuramyl-(pentapeptide) pyrophosphoryl-undecaprenol N-acetylglucosamine transferase, found in Hydrogenovibrio crunogenus (strain DSM 25203 / XCL-2) (Thiomicrospira crunogena).